A 184-amino-acid polypeptide reads, in one-letter code: Probable chemoreceptor glutamine deamidase CheD (184 aa).

The protein belongs to the CheD family.

It catalyses the reaction L-glutaminyl-[protein] + H2O = L-glutamyl-[protein] + NH4(+). Functionally, probably deamidates glutamine residues to glutamate on methyl-accepting chemotaxis receptors (MCPs), playing an important role in chemotaxis. The protein is Probable chemoreceptor glutamine deamidase CheD of Rhizobium rhizogenes (strain K84 / ATCC BAA-868) (Agrobacterium radiobacter).